The following is a 497-amino-acid chain: Glycerol kinase (497 aa).

An ADP-binding site is contributed by threonine 12. Positions 12, 13, and 14 each coordinate ATP. Threonine 12 provides a ligand contact to sn-glycerol 3-phosphate. Arginine 16 serves as a coordination point for ADP. Sn-glycerol 3-phosphate contacts are provided by arginine 82, glutamate 83, tyrosine 134, and aspartate 243. Arginine 82, glutamate 83, tyrosine 134, aspartate 243, and glutamine 244 together coordinate glycerol. ADP contacts are provided by threonine 265 and glycine 308. ATP-binding residues include threonine 265, glycine 308, glutamine 312, and glycine 409. Positions 409 and 413 each coordinate ADP.

It belongs to the FGGY kinase family. Homotetramer and homodimer (in equilibrium).

It catalyses the reaction glycerol + ATP = sn-glycerol 3-phosphate + ADP + H(+). Its pathway is polyol metabolism; glycerol degradation via glycerol kinase pathway; sn-glycerol 3-phosphate from glycerol: step 1/1. Its activity is regulated as follows. Activated by phosphorylation and inhibited by fructose 1,6-bisphosphate (FBP). Key enzyme in the regulation of glycerol uptake and metabolism. Catalyzes the phosphorylation of glycerol to yield sn-glycerol 3-phosphate. The polypeptide is Glycerol kinase (Caldanaerobacter subterraneus subsp. tengcongensis (strain DSM 15242 / JCM 11007 / NBRC 100824 / MB4) (Thermoanaerobacter tengcongensis)).